The sequence spans 382 residues: ATP phosphoribosyltransferase regulatory subunit (382 aa).

This sequence belongs to the class-II aminoacyl-tRNA synthetase family. HisZ subfamily. In terms of assembly, heteromultimer composed of HisG and HisZ subunits.

The protein localises to the cytoplasm. Its pathway is amino-acid biosynthesis; L-histidine biosynthesis; L-histidine from 5-phospho-alpha-D-ribose 1-diphosphate: step 1/9. Functionally, required for the first step of histidine biosynthesis. May allow the feedback regulation of ATP phosphoribosyltransferase activity by histidine. In Burkholderia vietnamiensis (strain G4 / LMG 22486) (Burkholderia cepacia (strain R1808)), this protein is ATP phosphoribosyltransferase regulatory subunit.